A 309-amino-acid chain; its full sequence is Homoserine kinase (309 aa).

ATP is bound at residue 91 to 101 (PIGSGLGSSAC).

Belongs to the GHMP kinase family. Homoserine kinase subfamily.

The protein resides in the cytoplasm. It carries out the reaction L-homoserine + ATP = O-phospho-L-homoserine + ADP + H(+). Its pathway is amino-acid biosynthesis; L-threonine biosynthesis; L-threonine from L-aspartate: step 4/5. Catalyzes the ATP-dependent phosphorylation of L-homoserine to L-homoserine phosphate. In Salmonella arizonae (strain ATCC BAA-731 / CDC346-86 / RSK2980), this protein is Homoserine kinase.